Here is a 298-residue protein sequence, read N- to C-terminus: Protease HtpX homolog (298 aa).

2 helical membrane-spanning segments follow: residues 14-34 and 39-59; these read VVLL…AGYL and YAMG…SMIF. Residue H143 coordinates Zn(2+). Residue E144 is part of the active site. H147 lines the Zn(2+) pocket. A run of 2 helical transmembrane segments spans residues 158-178 and 197-217; these read IAVA…RMLW and IITL…ASLI. E226 contacts Zn(2+).

Belongs to the peptidase M48B family. Zn(2+) is required as a cofactor.

It localises to the cell membrane. This is Protease HtpX homolog from Streptococcus pyogenes serotype M1.